A 170-amino-acid polypeptide reads, in one-letter code: RNA polymerase sigma factor TcsR (170 aa).

A sigma-70 factor domain-4 region spans residues 122–169; that stretch reads IKDLTQNEKNILRKIYLHGLRESEISRELNISRQAVNKTHLRALEKLK. Residues 143–162 constitute a DNA-binding region (H-T-H motif); the sequence is ESEISRELNISRQAVNKTHL.

Belongs to the sigma-70 factor family.

In terms of biological role, sigma factors are initiation factors that promote the attachment of RNA polymerase to specific initiation sites and are then released. Transcriptional regulator specifically required to activate expression of the toxin gene locus, composed of tcsL and tcdE/utxA. The chain is RNA polymerase sigma factor TcsR from Paraclostridium sordellii (strain ATCC 9714 / DSM 2141 / JCM 3814 / LMG 15708 / NCIMB 10717 / 211) (Clostridium sordellii).